A 313-amino-acid chain; its full sequence is Flagellin (313 aa).

Coiled coils occupy residues 5 to 33 and 97 to 117; these read INTN…ERLS and VQSE…KEVT. 4 repeat units span residues 179–197, 199–217, 255–259, and 262–266. The tract at residues 179-217 is 2 X 19 AA approximate tandem repeats; sequence KEAVAAKPAVPAQPAVPADPKNGVAAKPAVPAQPEVKAQ. The span at 190–199 shows a compositional bias: low complexity; the sequence is AQPAVPADPK. Residues 190-211 form a disordered region; the sequence is AQPAVPADPKNGVAAKPAVPAQ. A coiled-coil region spans residues 252–298; that stretch reads ESTVNNLNNTVNNLSAARSRIEDADYAVEVSNMSRGQILQQAGTSVL. Positions 255 to 266 are 2 X 5 AA approximate repeats of V-N-N-L-N; that stretch reads VNNLNNTVNNLS.

Belongs to the bacterial flagellin family.

It localises to the secreted. The protein localises to the bacterial flagellum. Functionally, flagellin is the subunit protein which polymerizes to form the filaments of bacterial flagella. The chain is Flagellin (fliC) from Xenorhabdus nematophila (Achromobacter nematophilus).